A 1037-amino-acid chain; its full sequence is Tyrosine-protein kinase-like otk (1037 aa).

A signal peptide spans 1–22 (MAALRISVWILVQALMMALVSS). N-linked (GlcNAc...) asparagine glycosylation is found at asparagine 23 and asparagine 39. The Extracellular portion of the chain corresponds to 23–582 (NSSHFLQLPQ…GGDGFLVTRA (560 aa)). 5 consecutive Ig-like C2-type domains span residues 25–115 (SHFL…AKLS), 114–200 (LSVI…RVMS), 252–366 (PEDL…APIN), 369–464 (PGTL…VAIN), and 469–559 (PKFS…VQLV). 4 disulfides stabilise this stretch: cysteine 46-cysteine 96, cysteine 138-cysteine 189, cysteine 277-cysteine 355, and cysteine 400-cysteine 448. Residues asparagine 337, asparagine 418, asparagine 430, asparagine 445, asparagine 458, asparagine 513, and asparagine 525 are each glycosylated (N-linked (GlcNAc...) asparagine). Cysteine 491 and cysteine 543 are oxidised to a cystine. A helical transmembrane segment spans residues 583 to 603 (VLITMTVALAYIVLVVGLMLW). Residues 604-1037 (CRYRRQARKA…LSKAMQSLEK (434 aa)) lie on the Cytoplasmic side of the membrane. Disordered stretches follow at residues 618–681 (LSTK…KKSA) and 719–764 (ATGS…KTSM). Residues 653 to 675 (QSRSKSNGDAQKSDDTACSQQSR) are compositionally biased toward polar residues. Serine 680 is subject to Phosphoserine. Residues 694–1035 (LTELIQIGRG…AALSKAMQSL (342 aa)) form the Protein kinase; inactive domain. Basic and acidic residues predominate over residues 724–735 (SDKDADTEKQHS).

Belongs to the protein kinase superfamily. Tyr protein kinase family. Insulin receptor subfamily. As to quaternary structure, interacts with plexA; component of a receptor complex that mediates the repulsive signaling in response to Semaphorin ligands.

It is found in the cell membrane. Its function is as follows. Acts as a calcium-dependent, homophilic cell adhesion molecule that regulates neural recognition during the development of the nervous system. Component of the repulsive Plexin signaling response to regulate motor axon guidance at the embryonic stage. Also component of a receptor complex that is required in the adult visual system to innervate the lamina layer; specific targeting of R1-R6 axons. This is Tyrosine-protein kinase-like otk from Drosophila ananassae (Fruit fly).